Reading from the N-terminus, the 95-residue chain is Co-chaperonin GroES (95 aa).

The protein belongs to the GroES chaperonin family. Heptamer of 7 subunits arranged in a ring. Interacts with the chaperonin GroEL.

It localises to the cytoplasm. In terms of biological role, together with the chaperonin GroEL, plays an essential role in assisting protein folding. The GroEL-GroES system forms a nano-cage that allows encapsulation of the non-native substrate proteins and provides a physical environment optimized to promote and accelerate protein folding. GroES binds to the apical surface of the GroEL ring, thereby capping the opening of the GroEL channel. This Desulfosudis oleivorans (strain DSM 6200 / JCM 39069 / Hxd3) (Desulfococcus oleovorans) protein is Co-chaperonin GroES.